The following is a 416-amino-acid chain: MDKFQIQGNGPLKGEIRVSGAKNAALPILCAGLLTADTVTIDNVPNLQDTRTMLKLLRQMGMHAEMTGSTATLKGTDINSPEAPYELVKTMRASILVLGPLVARFGEARVSLPGGCGIGARPVDQHIKGLQAMGAEISIEHGFIHARASRLKGARVVTDMITVTGTENLLMAATLADGETVLENAAREPEVTDLANLLVKMGAKIDGIGTDRLIVQGVDKLHGATHSVVADRIEAGTFLCAAAASLGDLVLRDIPPLILDAVLIKLREAGANIETGDDWIRLSMSQRAQAVSFRTSEYPAFPTDMQAQFMALNAVAEGTARITETIFENRFMHVQELNRLGANITAEGNTAVVTGVPRLSGASVMATDLRASASLVIAGLVADGDTVIDRIYHLDRGYDRMEDKLSAVGAKIRRIA.

K22–N23 serves as a coordination point for phosphoenolpyruvate. UDP-N-acetyl-alpha-D-glucosamine is bound at residue R92. Residue C116 is the Proton donor of the active site. A 2-(S-cysteinyl)pyruvic acid O-phosphothioketal modification is found at C116. UDP-N-acetyl-alpha-D-glucosamine is bound by residues R121–Q125, D304, and I326.

The protein belongs to the EPSP synthase family. MurA subfamily.

It localises to the cytoplasm. The enzyme catalyses phosphoenolpyruvate + UDP-N-acetyl-alpha-D-glucosamine = UDP-N-acetyl-3-O-(1-carboxyvinyl)-alpha-D-glucosamine + phosphate. The protein operates within cell wall biogenesis; peptidoglycan biosynthesis. In terms of biological role, cell wall formation. Adds enolpyruvyl to UDP-N-acetylglucosamine. In Cupriavidus pinatubonensis (strain JMP 134 / LMG 1197) (Cupriavidus necator (strain JMP 134)), this protein is UDP-N-acetylglucosamine 1-carboxyvinyltransferase.